Here is a 118-residue protein sequence, read N- to C-terminus: Myotrophin (118 aa).

3 ANK repeats span residues 1–30 (MSDK…DVNR), 34–65 (GGRK…NAPD), and 67–98 (HNIT…TVKG).

It belongs to the myotrophin family.

It is found in the cytoplasm. The protein resides in the nucleus. Its subcellular location is the perinuclear region. Its function is as follows. Regulates NF-kappa-B transcription factor activity. Promotes growth of cardiomyocytes, but not cardiomyocyte proliferation. Promotes cardiac muscle hypertrophy. Plays a role in the regulation of the growth of actin filaments. Inhibits the activity of the F-actin-capping protein complex. The sequence is that of Myotrophin (MTPN) from Gallus gallus (Chicken).